Here is a 338-residue protein sequence, read N- to C-terminus: Lipoate-protein ligase A (338 aa).

In terms of domain architecture, BPL/LPL catalytic spans 29 to 216; that stretch reads PATQRVLFLW…AFFAHYGERV (188 aa). Residues arginine 71, 76–79, and lysine 134 each bind ATP; that span reads GAVF. Lysine 134 contacts (R)-lipoate.

Belongs to the LplA family. Monomer.

It localises to the cytoplasm. The catalysed reaction is L-lysyl-[lipoyl-carrier protein] + (R)-lipoate + ATP = N(6)-[(R)-lipoyl]-L-lysyl-[lipoyl-carrier protein] + AMP + diphosphate + H(+). The protein operates within protein modification; protein lipoylation via exogenous pathway; protein N(6)-(lipoyl)lysine from lipoate: step 1/2. Its pathway is protein modification; protein lipoylation via exogenous pathway; protein N(6)-(lipoyl)lysine from lipoate: step 2/2. Functionally, catalyzes both the ATP-dependent activation of exogenously supplied lipoate to lipoyl-AMP and the transfer of the activated lipoyl onto the lipoyl domains of lipoate-dependent enzymes. This chain is Lipoate-protein ligase A, found in Shigella dysenteriae serotype 1 (strain Sd197).